The chain runs to 306 residues: Natural cytotoxicity triggering receptor 1 (306 aa).

The first 21 residues, 1 to 21, serve as a signal peptide directing secretion; the sequence is MSSTLRALLCLGLCLSQRISA. At 22-257 the chain is on the extracellular side; it reads PKQTLPKPII…WDHTAQNLLR (236 aa). Ig-like domains lie at 42–100 and 137–192; these read EKQA…SCIY and GEKV…RCFG. 2 disulfide bridges follow: Cys-49/Cys-98 and Cys-144/Cys-190. Asn-216 carries an N-linked (GlcNAc...) asparagine glycan. Residues 258–278 form a helical membrane-spanning segment; it reads MGLAFLVLVALVCLLVEDWLS. Over 279 to 306 the chain is Cytoplasmic; sequence RKRTREQASRASTWEGRRRLNKHKDSEE.

The protein belongs to the natural cytotoxicity receptor (NCR) family. In terms of assembly, interacts with CD3Z and FCER1G. As to expression, expressed in NK cells.

The protein resides in the cell membrane. In terms of biological role, cytotoxicity-activating receptor that may contribute to the increased efficiency of activated natural killer (NK) cells to mediate tumor cell lysis. This is Natural cytotoxicity triggering receptor 1 (NCR1) from Macaca fascicularis (Crab-eating macaque).